The following is a 600-amino-acid chain: Proline--tRNA ligase (600 aa).

The protein belongs to the class-II aminoacyl-tRNA synthetase family. ProS type 1 subfamily. In terms of assembly, homodimer.

Its subcellular location is the cytoplasm. The enzyme catalyses tRNA(Pro) + L-proline + ATP = L-prolyl-tRNA(Pro) + AMP + diphosphate. Its function is as follows. Catalyzes the attachment of proline to tRNA(Pro) in a two-step reaction: proline is first activated by ATP to form Pro-AMP and then transferred to the acceptor end of tRNA(Pro). As ProRS can inadvertently accommodate and process non-cognate amino acids such as alanine and cysteine, to avoid such errors it has two additional distinct editing activities against alanine. One activity is designated as 'pretransfer' editing and involves the tRNA(Pro)-independent hydrolysis of activated Ala-AMP. The other activity is designated 'posttransfer' editing and involves deacylation of mischarged Ala-tRNA(Pro). The misacylated Cys-tRNA(Pro) is not edited by ProRS. In Prochlorococcus marinus subsp. pastoris (strain CCMP1986 / NIES-2087 / MED4), this protein is Proline--tRNA ligase.